The primary structure comprises 206 residues: HTH-type transcriptional regulator Hpr (206 aa).

The HTH marR-type domain maps to 13–157 (ALLFSQRMAQ…MMSIIRHIYG (145 aa)). The H-T-H motif DNA-binding region spans 63-86 (ISEIAKFGVMHVSTAFNFSKKLEE). A disordered region spans residues 177–206 (SEEGKMKKKQEAKEAGESIEVDKPLEPLKN). The segment covering 178 to 206 (EEGKMKKKQEAKEAGESIEVDKPLEPLKN) has biased composition (basic and acidic residues).

As to quaternary structure, homodimer.

In terms of biological role, negative regulator of protease production and sporulation. This chain is HTH-type transcriptional regulator Hpr, found in Bacillus licheniformis (strain ATCC 14580 / DSM 13 / JCM 2505 / CCUG 7422 / NBRC 12200 / NCIMB 9375 / NCTC 10341 / NRRL NRS-1264 / Gibson 46).